A 680-amino-acid polypeptide reads, in one-letter code: Forkhead box protein P4 (680 aa).

The segment covering 1–17 (MMVESASETIRSAPSGQ) has biased composition (polar residues). The disordered stretch occupies residues 1-56 (MMVESASETIRSAPSGQNGVGSLSGQADGSSGGATGTTASGTGREVTTGADSNGEM). Residues Ser52 and Ser86 each carry the phosphoserine modification. Residues Lys175 and Lys246 each participate in a glycyl lysine isopeptide (Lys-Gly) (interchain with G-Cter in SUMO2) cross-link. Residues 262–306 (FAAPPKVSPPLSHHTLPNGQPTVLTSRRDSSSHEETPGSHPLYGH) are disordered. Over residues 276 to 286 (TLPNGQPTVLT) the composition is skewed to polar residues. The span at 287–298 (SRRDSSSHEETP) shows a compositional bias: basic and acidic residues. A C2H2-type zinc finger spans residues 307-332 (GECKWPGCETLCEDLGQFIKHLNTEH). The interval 349–370 (VQQLEIQLAKESERLQAMMAHL) is leucine-zipper. Lys378 participates in a covalent cross-link: Glycyl lysine isopeptide (Lys-Gly) (interchain with G-Cter in SUMO2). Residues 407 to 445 (GLVHPPTSAAAPVTPLRPPGLGSASLHGGGPARRRSSDK) are disordered. Positions 467–559 (RPPFTYASLI…KMTGSPTLVK (93 aa)) form a DNA-binding region, fork-head. Ser554 carries the phosphoserine modification. Positions 602-680 (PLSHDDVGAP…EEELPGEELS (79 aa)) are disordered. Residues 617-635 (SNGSSSPPRLSPPQYSHQV) are compositionally biased toward polar residues. Acidic residues predominate over residues 668 to 680 (RDLEEELPGEELS).

In terms of assembly, forms homodimers and heterodimers with FOXP1 and FOXP2. Dimerization is required for DNA-binding.

The protein localises to the nucleus. Its function is as follows. Transcriptional repressor that represses lung-specific expression. The chain is Forkhead box protein P4 (FOXP4) from Homo sapiens (Human).